Here is a 401-residue protein sequence, read N- to C-terminus: Glutamyl-tRNA reductase (401 aa).

Residues 45 to 48, serine 101, 106 to 108, and glutamine 112 each bind substrate; these read TCNR and EDQ. The active-site Nucleophile is cysteine 46. 177–182 serves as a coordination point for NADP(+); sequence GYGEVG.

This sequence belongs to the glutamyl-tRNA reductase family. As to quaternary structure, homodimer.

The catalysed reaction is (S)-4-amino-5-oxopentanoate + tRNA(Glu) + NADP(+) = L-glutamyl-tRNA(Glu) + NADPH + H(+). The protein operates within porphyrin-containing compound metabolism; protoporphyrin-IX biosynthesis; 5-aminolevulinate from L-glutamyl-tRNA(Glu): step 1/2. In terms of biological role, catalyzes the NADPH-dependent reduction of glutamyl-tRNA(Glu) to glutamate 1-semialdehyde (GSA). The sequence is that of Glutamyl-tRNA reductase from Clostridium beijerinckii (strain ATCC 51743 / NCIMB 8052) (Clostridium acetobutylicum).